Reading from the N-terminus, the 147-residue chain is Transcriptional regulator MraZ (147 aa).

2 SpoVT-AbrB domains span residues 5 to 50 (AIAL…PLSA) and 79 to 122 (AQEE…SDAG).

The protein belongs to the MraZ family. In terms of assembly, forms oligomers.

The protein resides in the cytoplasm. The protein localises to the nucleoid. This is Transcriptional regulator MraZ from Aromatoleum aromaticum (strain DSM 19018 / LMG 30748 / EbN1) (Azoarcus sp. (strain EbN1)).